We begin with the raw amino-acid sequence, 433 residues long: Inorganic triphosphatase (433 aa).

The region spanning 2-202 (AQEIELKFIV…ARGYHLAQGN (201 aa)) is the CYTH domain. In terms of domain architecture, CHAD spans 218-433 (KADVEQGLEA…EPFWLHSGKR (216 aa)).

It catalyses the reaction triphosphate + H2O = phosphate + diphosphate. Inhibited by calcium ion and activated by magnesium ion. In terms of biological role, involved in the hydrolysis of the beta-gamma-phosphoanhydride linkage of triphosphate-containing substrates (inorganic or nucleoside-linked). Catalyzes the hydrolysis of inorganic triphosphate (PPPi), which could be cytotoxic because of its high affinity for calcium ion, thereby interfering with calcium signaling. It also hydrolyzes slowly thiamine triphosphate (ThTP). YgiF is a specific PPPase, but it contributes only marginally to the total PPPase activity in E.coli, where the main enzyme responsible for hydrolysis of PPPi is inorganic pyrophosphatase (PPase). The chain is Inorganic triphosphatase (ygiF) from Escherichia coli (strain K12).